The following is a 210-amino-acid chain: Urease accessory protein UreE (210 aa).

Residues 144-210 (PEGGAYAAGG…GHAHPHSLAR (67 aa)) form a disordered region. The span at 156–202 (HGHDHPHHDHGHDHAHAHAHGTEACDHEHSHDHDCGHHHDHGQDYGH) shows a compositional bias: basic and acidic residues.

Belongs to the UreE family.

Its subcellular location is the cytoplasm. Its function is as follows. Involved in urease metallocenter assembly. Binds nickel. Probably functions as a nickel donor during metallocenter assembly. This Paracidovorax citrulli (strain AAC00-1) (Acidovorax citrulli) protein is Urease accessory protein UreE.